Reading from the N-terminus, the 287-residue chain is Bifunctional protein FolD (287 aa).

NADP(+)-binding positions include 166 to 168 (GAS) and isoleucine 232.

It belongs to the tetrahydrofolate dehydrogenase/cyclohydrolase family. Homodimer.

The catalysed reaction is (6R)-5,10-methylene-5,6,7,8-tetrahydrofolate + NADP(+) = (6R)-5,10-methenyltetrahydrofolate + NADPH. The enzyme catalyses (6R)-5,10-methenyltetrahydrofolate + H2O = (6R)-10-formyltetrahydrofolate + H(+). It functions in the pathway one-carbon metabolism; tetrahydrofolate interconversion. Its function is as follows. Catalyzes the oxidation of 5,10-methylenetetrahydrofolate to 5,10-methenyltetrahydrofolate and then the hydrolysis of 5,10-methenyltetrahydrofolate to 10-formyltetrahydrofolate. The protein is Bifunctional protein FolD of Pectobacterium carotovorum subsp. carotovorum (strain PC1).